We begin with the raw amino-acid sequence, 153 residues long: NAD(P)H-quinone oxidoreductase subunit N (153 aa).

The protein belongs to the complex I NdhN subunit family. In terms of assembly, NDH-1 can be composed of about 15 different subunits; different subcomplexes with different compositions have been identified which probably have different functions.

The protein resides in the cellular thylakoid membrane. The enzyme catalyses a plastoquinone + NADH + (n+1) H(+)(in) = a plastoquinol + NAD(+) + n H(+)(out). It carries out the reaction a plastoquinone + NADPH + (n+1) H(+)(in) = a plastoquinol + NADP(+) + n H(+)(out). NDH-1 shuttles electrons from an unknown electron donor, via FMN and iron-sulfur (Fe-S) centers, to quinones in the respiratory and/or the photosynthetic chain. The immediate electron acceptor for the enzyme in this species is believed to be plastoquinone. Couples the redox reaction to proton translocation, and thus conserves the redox energy in a proton gradient. Cyanobacterial NDH-1 also plays a role in inorganic carbon-concentration. This Synechococcus sp. (strain RCC307) protein is NAD(P)H-quinone oxidoreductase subunit N.